A 101-amino-acid polypeptide reads, in one-letter code: NAD(P)H-quinone oxidoreductase subunit 4L, chloroplastic (101 aa).

A run of 3 helical transmembrane segments spans residues 2–22, 32–52, and 61–81; these read MLEH…YGLI, MCLE…SDFF, and IFSI…LAIV.

The protein belongs to the complex I subunit 4L family. NDH is composed of at least 16 different subunits, 5 of which are encoded in the nucleus.

It is found in the plastid. It localises to the chloroplast thylakoid membrane. The catalysed reaction is a plastoquinone + NADH + (n+1) H(+)(in) = a plastoquinol + NAD(+) + n H(+)(out). It catalyses the reaction a plastoquinone + NADPH + (n+1) H(+)(in) = a plastoquinol + NADP(+) + n H(+)(out). Its function is as follows. NDH shuttles electrons from NAD(P)H:plastoquinone, via FMN and iron-sulfur (Fe-S) centers, to quinones in the photosynthetic chain and possibly in a chloroplast respiratory chain. The immediate electron acceptor for the enzyme in this species is believed to be plastoquinone. Couples the redox reaction to proton translocation, and thus conserves the redox energy in a proton gradient. This Guizotia abyssinica (Niger) protein is NAD(P)H-quinone oxidoreductase subunit 4L, chloroplastic.